The chain runs to 178 residues: Large ribosomal subunit protein uL6 (178 aa).

This sequence belongs to the universal ribosomal protein uL6 family. In terms of assembly, part of the 50S ribosomal subunit.

Its function is as follows. This protein binds to the 23S rRNA, and is important in its secondary structure. It is located near the subunit interface in the base of the L7/L12 stalk, and near the tRNA binding site of the peptidyltransferase center. The sequence is that of Large ribosomal subunit protein uL6 from Corynebacterium diphtheriae (strain ATCC 700971 / NCTC 13129 / Biotype gravis).